The sequence spans 282 residues: Pantothenate synthetase (282 aa).

30 to 37 (MGNLHDGH) lines the ATP pocket. Residue histidine 37 is the Proton donor of the active site. Position 61 (glutamine 61) interacts with (R)-pantoate. A beta-alanine-binding site is contributed by glutamine 61. 149 to 152 (GNKD) lines the ATP pocket. Residue glutamine 155 coordinates (R)-pantoate. ATP contacts are provided by residues alanine 178 and 186–189 (MSSR).

It belongs to the pantothenate synthetase family. As to quaternary structure, homodimer.

The protein localises to the cytoplasm. The enzyme catalyses (R)-pantoate + beta-alanine + ATP = (R)-pantothenate + AMP + diphosphate + H(+). It participates in cofactor biosynthesis; (R)-pantothenate biosynthesis; (R)-pantothenate from (R)-pantoate and beta-alanine: step 1/1. Its function is as follows. Catalyzes the condensation of pantoate with beta-alanine in an ATP-dependent reaction via a pantoyl-adenylate intermediate. In Marinomonas sp. (strain MWYL1), this protein is Pantothenate synthetase.